The following is a 199-amino-acid chain: Adult-specific cuticular protein ACP-22 (199 aa).

An N-terminal signal peptide occupies residues methionine 1 to serine 19. The tract at residues glycine 63–glutamate 103 is disordered. Residues glycine 82–glycine 102 show a composition bias toward gly residues. The Chitin-binding type R&amp;R domain occupies histidine 133 to histidine 199.

Epidermal regions synthesizing hard cuticle.

Its function is as follows. Cuticular proteins play a significant role in determining the physical properties of cuticles. This Tenebrio molitor (Yellow mealworm beetle) protein is Adult-specific cuticular protein ACP-22 (ACP22).